Reading from the N-terminus, the 310-residue chain is Putative S-adenosyl-L-methionine-dependent methyltransferase MMAR_3534 (310 aa).

S-adenosyl-L-methionine is bound by residues D131 and 160-161 (DL).

The protein belongs to the UPF0677 family.

In terms of biological role, exhibits S-adenosyl-L-methionine-dependent methyltransferase activity. This Mycobacterium marinum (strain ATCC BAA-535 / M) protein is Putative S-adenosyl-L-methionine-dependent methyltransferase MMAR_3534.